Here is a 342-residue protein sequence, read N- to C-terminus: Heat-inducible transcription repressor HrcA (342 aa).

Belongs to the HrcA family.

Its function is as follows. Negative regulator of class I heat shock genes (grpE-dnaK-dnaJ and groELS operons). Prevents heat-shock induction of these operons. The polypeptide is Heat-inducible transcription repressor HrcA (Dechloromonas aromatica (strain RCB)).